We begin with the raw amino-acid sequence, 184 residues long: ATP-dependent protease subunit HslV (184 aa).

Threonine 12 is an active-site residue. 3 residues coordinate Na(+): alanine 166, cysteine 169, and threonine 172.

The protein belongs to the peptidase T1B family. HslV subfamily. A double ring-shaped homohexamer of HslV is capped on each side by a ring-shaped HslU homohexamer. The assembly of the HslU/HslV complex is dependent on binding of ATP.

The protein localises to the cytoplasm. The catalysed reaction is ATP-dependent cleavage of peptide bonds with broad specificity.. With respect to regulation, allosterically activated by HslU binding. Functionally, protease subunit of a proteasome-like degradation complex believed to be a general protein degrading machinery. This chain is ATP-dependent protease subunit HslV, found in Brucella melitensis biotype 1 (strain ATCC 23456 / CCUG 17765 / NCTC 10094 / 16M).